A 391-amino-acid chain; its full sequence is Ectodysplasin-A (391 aa).

Over 1 to 41 (MGYPEVERRELLPAAAPRERGSQGCGCGGAPARAGEGNSCL) the chain is Cytoplasmic. The helical; Signal-anchor for type II membrane protein transmembrane segment at 42 to 62 (LFLGFFGLSLALHLLTLCCYL) threads the bilayer. Over 63-391 (ELRSELRRER…AIRLGEAPAS (329 aa)) the chain is Extracellular. Disordered regions lie at residues 73 to 127 (GAES…HSDS) and 146 to 245 (YSEE…GTRE). Low complexity predominate over residues 86–101 (TSGTLSSLGGLDPDSP). The segment covering 102–113 (ITSHLGQPSPKQ) has biased composition (polar residues). Positions 180 to 229 (GPPGPNGPPGPPGPPGPQGPPGIPGIPGIPGTTVMGPPGPPGPPGPQGPP) constitute a Collagen-like domain. Composition is skewed to pro residues over residues 181-203 (PPGP…PGIP) and 216-228 (PPGP…PQGP). Residues 249-385 (AVVHLQGQGS…HTTFFGAIRL (137 aa)) form the THD domain. N313 carries N-linked (GlcNAc...) asparagine glycosylation. Cysteines 332 and 346 form a disulfide. N372 carries an N-linked (GlcNAc...) asparagine glycan.

This sequence belongs to the tumor necrosis factor family. As to quaternary structure, homotrimer. The homotrimers may then dimerize and form higher-order oligomers. In terms of processing, N-glycosylated. Processing by furin produces a secreted form. Not abundant; expressed in specific cell types of ectodermal (but not mesodermal) origin of keratinocytes, hair follicles, sweat glands. Also in adult heart, liver, muscle, pancreas, prostate, fetal liver, uterus, small intestine and umbilical cord.

Its subcellular location is the cell membrane. It localises to the secreted. Its function is as follows. Cytokine which is involved in epithelial-mesenchymal signaling during morphogenesis of ectodermal organs. Functions as a ligand activating the DEATH-domain containing receptors EDAR and EDA2R. May also play a role in cell adhesion. In terms of biological role, binds only to the receptor EDAR, while isoform 3 binds exclusively to the receptor EDA2R. Functionally, binds only to the receptor EDA2R. The sequence is that of Ectodysplasin-A (EDA) from Homo sapiens (Human).